The chain runs to 269 residues: Ribonuclease HII (269 aa).

The region spanning 61 to 250 (RLVCGVDEAG…VRKMLSPGLE (190 aa)) is the RNase H type-2 domain. 3 residues coordinate a divalent metal cation: Asp-67, Glu-68, and Asp-158.

Belongs to the RNase HII family. The cofactor is Mn(2+). Mg(2+) is required as a cofactor.

The protein localises to the cytoplasm. The catalysed reaction is Endonucleolytic cleavage to 5'-phosphomonoester.. In terms of biological role, endonuclease that specifically degrades the RNA of RNA-DNA hybrids. This Parvibaculum lavamentivorans (strain DS-1 / DSM 13023 / NCIMB 13966) protein is Ribonuclease HII.